A 104-amino-acid polypeptide reads, in one-letter code: Large ribosomal subunit protein uL24 (104 aa).

The protein belongs to the universal ribosomal protein uL24 family. As to quaternary structure, part of the 50S ribosomal subunit.

One of two assembly initiator proteins, it binds directly to the 5'-end of the 23S rRNA, where it nucleates assembly of the 50S subunit. In terms of biological role, one of the proteins that surrounds the polypeptide exit tunnel on the outside of the subunit. The protein is Large ribosomal subunit protein uL24 of Bartonella bacilliformis (strain ATCC 35685 / KC583 / Herrer 020/F12,63).